Reading from the N-terminus, the 177-residue chain is Putative zinc finger protein 826 (177 aa).

The C2H2-type 1; degenerate zinc-finger motif lies at 99–114 (KTFTWSSSPHKHRRTH). The C2H2-type 2; degenerate zinc finger occupies 120–142 (YKCEECGKAFTASSTLSEYKTIH). A C2H2-type 3 zinc finger spans residues 148 to 170 (CKCEECGKAFNWSSDFNKHKRIH).

The protein localises to the nucleus. Functionally, may be involved in transcriptional regulation. The chain is Putative zinc finger protein 826 (ZNF826P) from Homo sapiens (Human).